The chain runs to 309 residues: Neuropeptide-like 1 (309 aa).

Residues 1–28 (MQAVLQSAHSSRRLMLLLSMLLNAAIQP) form the signal peptide. A propeptide spanning residues 29–99 (RSIIVSATDD…GEYPDYLEED (71 aa)) is cleaved from the precursor. A disordered region spans residues 126–147 (GQLPTAEPGEDYGDADSGEPSE). Residues 133–144 (PGEDYGDADSGE) show a composition bias toward acidic residues. Tyr-164 carries the tyrosine amide modification. Asn-182 bears the Asparagine amide mark.

In terms of tissue distribution, MTYamide peptide: Expressed in the larval CNS (at protein level). NAP peptide: Expressed in the larval CNS (at protein level). IPNamide peptide: Expressed in the ventral ganglion of the third larval instar and adult brain (at protein level).

The protein localises to the secreted. In terms of biological role, acts as a ligand for the receptor-type guanylate cyclase Gyc76C. Stimulates Gyc76c-dependent cGMP production and modulates the IMD innate immune pathway in response to salt stress by inducing nuclear translocation of NF-kappa-B protein Rel which leads to increased expression of the antimicrobial peptide diptericin. Does not appear to play a role in Gyc76C-mediated wing development. The sequence is that of Neuropeptide-like 1 (Nplp1) from Drosophila melanogaster (Fruit fly).